Here is a 471-residue protein sequence, read N- to C-terminus: Argininosuccinate lyase (471 aa).

This sequence belongs to the lyase 1 family. Argininosuccinate lyase subfamily.

It localises to the cytoplasm. It carries out the reaction 2-(N(omega)-L-arginino)succinate = fumarate + L-arginine. Its pathway is amino-acid biosynthesis; L-arginine biosynthesis; L-arginine from L-ornithine and carbamoyl phosphate: step 3/3. This chain is Argininosuccinate lyase, found in Parasynechococcus marenigrum (strain WH8102).